A 236-amino-acid chain; its full sequence is Pyridoxine 5'-phosphate synthase (236 aa).

Asparagine 6 contacts 3-amino-2-oxopropyl phosphate. A 1-deoxy-D-xylulose 5-phosphate-binding site is contributed by 8-9 (DH). Arginine 17 lines the 3-amino-2-oxopropyl phosphate pocket. The Proton acceptor role is filled by histidine 42. 1-deoxy-D-xylulose 5-phosphate is bound by residues arginine 44 and histidine 49. The active-site Proton acceptor is glutamate 69. A 1-deoxy-D-xylulose 5-phosphate-binding site is contributed by threonine 99. Residue histidine 190 is the Proton donor of the active site. 3-amino-2-oxopropyl phosphate-binding positions include glycine 191 and 212 to 213 (GH).

Belongs to the PNP synthase family. As to quaternary structure, homooctamer; tetramer of dimers.

It is found in the cytoplasm. It catalyses the reaction 3-amino-2-oxopropyl phosphate + 1-deoxy-D-xylulose 5-phosphate = pyridoxine 5'-phosphate + phosphate + 2 H2O + H(+). The protein operates within cofactor biosynthesis; pyridoxine 5'-phosphate biosynthesis; pyridoxine 5'-phosphate from D-erythrose 4-phosphate: step 5/5. In terms of biological role, catalyzes the complicated ring closure reaction between the two acyclic compounds 1-deoxy-D-xylulose-5-phosphate (DXP) and 3-amino-2-oxopropyl phosphate (1-amino-acetone-3-phosphate or AAP) to form pyridoxine 5'-phosphate (PNP) and inorganic phosphate. The protein is Pyridoxine 5'-phosphate synthase of Chlorobium phaeobacteroides (strain DSM 266 / SMG 266 / 2430).